We begin with the raw amino-acid sequence, 183 residues long: Microfibrillar-associated protein 2 (183 aa).

The or 19 signal peptide spans 1 to 17 (MRAAYLFLLFLPAGLLA). Gln-18 is subject to Pyrrolidone carboxylic acid. A sulfotyrosine mark is found at Tyr-47, Tyr-48, and Tyr-50. The disordered stretch occupies residues 58 to 94 (SEEQFQFQSQQQVQQEVIPAPTPEPGNAELEPTEPGP). The segment covering 60 to 74 (EQFQFQSQQQVQQEV) has biased composition (low complexity). The ShKT domain maps to 153 to 183 (CRDKFSKCGVMASSGLCQSVAASCARSCGSC). Cystine bridges form between Cys-153-Cys-183, Cys-160-Cys-176, and Cys-169-Cys-180.

Belongs to the MFAP family. Forms a ternary complex with BGN and ELN. Interacts with FBN1 (via N-terminal domain) and FBN2. Post-translationally, forms intermolecular disulfide bonds either with other MAGP-1 molecules or with other components of the microfibrils. May form transglutaminase cross-links. O-glycosylated.

Its subcellular location is the secreted. It localises to the extracellular space. The protein resides in the extracellular matrix. Component of the elastin-associated microfibrils. In Homo sapiens (Human), this protein is Microfibrillar-associated protein 2 (MFAP2).